The following is a 569-amino-acid chain: Atlastin-2 (569 aa).

The tract at residues 1-49 (MAEGGSLRNRTRFGSRSNEAMNHVDYPDENFVEEIQLNSDTEVMEKPRP) is N-terminal hypervariable region (HVR). Over 1-464 (MAEGGSLRNR…NIFYAARTPA (464 aa)) the chain is Cytoplasmic. Residues 80 to 324 (DLNVVVLSVA…LVPLLLAPEN (245 aa)) enclose the GB1/RHD3-type G domain. GDP-binding residues include Arg-93, Lys-94, Gly-95, Lys-96, Ser-97, Phe-98, Gln-163, Arg-232, and Asp-233. 6 residues coordinate GTP: Arg-93, Lys-94, Gly-95, Lys-96, Ser-97, and Phe-98. Ser-97 is a Mg(2+) binding site. GTP-binding residues include Arg-232 and Asp-233. Residues 244-272 (LEGGNKFLEKRLQVKQNQHEELQNVRKHI) adopt a coiled-coil conformation. Residues Val-291 and Asn-294 each contribute to the GDP site. Val-291 lines the GTP pocket. Positions 362 to 453 (MLQATAEANN…YANFLKHNDG (92 aa)) are 3HB (three-helix bundle) domain. Residues 454 to 462 (KNIFYAART) are linker. Residues 465 to 485 (TLFAVMFAMYIISGLTGFIGM) traverse the membrane as a helical segment. Residues 486–487 (NS) are Lumenal-facing. The helical transmembrane segment at 488 to 508 (IATICNLIMGLTLLSFCTWAY) threads the bilayer. The Cytoplasmic portion of the chain corresponds to 509-569 (VKYSGEFREL…DQVSGRLKTN (61 aa)). The tract at residues 535–569 (KPLSDNLMEDNIRQTVRNSIKAGLTDQVSGRLKTN) is autoinhibitory domain.

This sequence belongs to the TRAFAC class dynamin-like GTPase superfamily. GB1/RHD3 GTPase family. GB1 subfamily. In terms of assembly, monomeric and homodimeric. The homodimer, transiently formed by two molecules on opposing membranes, is the active form mediating ER membrane fusion.

It localises to the endoplasmic reticulum membrane. It catalyses the reaction GTP + H2O = GDP + phosphate + H(+). In terms of biological role, atlastin-2 (ATL2) is a membrane-anchored GTPase that mediates the GTP-dependent fusion of endoplasmic reticulum (ER) membranes, maintaining the continuous ER network. It facilitates the formation of three-way junctions where ER tubules intersect. Two atlastin-2 on neighboring ER tubules bind GTP and form loose homodimers through the GB1/RHD3-type G domains and 3HB regions. Upon GTP hydrolysis, the 3HB regions tighten, pulling the membranes together to drive their fusion. After fusion, the homodimer disassembles upon release of inorganic phosphate (Pi). Subsequently, GDP dissociates, resetting the monomers to a conformation ready for a new fusion cycle. This chain is Atlastin-2 (atl2), found in Xenopus laevis (African clawed frog).